The primary structure comprises 427 residues: Histidinol dehydrogenase (427 aa).

Residues Tyr-125, Gln-186, and Asn-209 each coordinate NAD(+). Residues Ser-234, Gln-256, and His-259 each coordinate substrate. The Zn(2+) site is built by Gln-256 and His-259. Residues Glu-325 and His-326 each act as proton acceptor in the active site. Substrate is bound by residues His-326, Asp-359, Glu-413, and His-419. Asp-359 provides a ligand contact to Zn(2+). His-419 contributes to the Zn(2+) binding site.

The protein belongs to the histidinol dehydrogenase family. Zn(2+) is required as a cofactor.

It carries out the reaction L-histidinol + 2 NAD(+) + H2O = L-histidine + 2 NADH + 3 H(+). The protein operates within amino-acid biosynthesis; L-histidine biosynthesis; L-histidine from 5-phospho-alpha-D-ribose 1-diphosphate: step 9/9. In terms of biological role, catalyzes the sequential NAD-dependent oxidations of L-histidinol to L-histidinaldehyde and then to L-histidine. The protein is Histidinol dehydrogenase of Leptospira interrogans serogroup Icterohaemorrhagiae serovar copenhageni (strain Fiocruz L1-130).